Consider the following 636-residue polypeptide: tRNA 5-methylaminomethyl-2-thiouridine biosynthesis bifunctional protein MnmC (636 aa).

The tRNA (mnm(5)s(2)U34)-methyltransferase stretch occupies residues 1 to 202 (MTVSKILKQV…ERAALRAQSH (202 aa)). Residues 227–636 (IGGGVASACL…GKALEMSGKS (410 aa)) are FAD-dependent cmnm(5)s(2)U34 oxidoreductase.

In the N-terminal section; belongs to the methyltransferase superfamily. tRNA (mnm(5)s(2)U34)-methyltransferase family. It in the C-terminal section; belongs to the DAO family. It depends on FAD as a cofactor.

It is found in the cytoplasm. The enzyme catalyses 5-aminomethyl-2-thiouridine(34) in tRNA + S-adenosyl-L-methionine = 5-methylaminomethyl-2-thiouridine(34) in tRNA + S-adenosyl-L-homocysteine + H(+). In terms of biological role, catalyzes the last two steps in the biosynthesis of 5-methylaminomethyl-2-thiouridine (mnm(5)s(2)U) at the wobble position (U34) in tRNA. Catalyzes the FAD-dependent demodification of cmnm(5)s(2)U34 to nm(5)s(2)U34, followed by the transfer of a methyl group from S-adenosyl-L-methionine to nm(5)s(2)U34, to form mnm(5)s(2)U34. The protein is tRNA 5-methylaminomethyl-2-thiouridine biosynthesis bifunctional protein MnmC of Shewanella halifaxensis (strain HAW-EB4).